A 359-amino-acid chain; its full sequence is tRNA-specific 2-thiouridylase MnmA (359 aa).

ATP-binding positions include 9 to 16 (GISGGVDS) and Met-35. The interval 95-97 (NPD) is interaction with target base in tRNA. The Nucleophile role is filled by Cys-100. Cysteines 100 and 197 form a disulfide. Gly-124 is a binding site for ATP. The tract at residues 147–149 (KDQ) is interaction with tRNA. Cys-197 (cysteine persulfide intermediate) is an active-site residue. Residues 309 to 310 (RY) form an interaction with tRNA region.

It belongs to the MnmA/TRMU family.

It is found in the cytoplasm. The catalysed reaction is S-sulfanyl-L-cysteinyl-[protein] + uridine(34) in tRNA + AH2 + ATP = 2-thiouridine(34) in tRNA + L-cysteinyl-[protein] + A + AMP + diphosphate + H(+). Functionally, catalyzes the 2-thiolation of uridine at the wobble position (U34) of tRNA, leading to the formation of s(2)U34. This chain is tRNA-specific 2-thiouridylase MnmA, found in Francisella tularensis subsp. novicida (strain U112).